The primary structure comprises 254 residues: Thiazole synthase (254 aa).

Residue Lys95 is the Schiff-base intermediate with DXP of the active site. 1-deoxy-D-xylulose 5-phosphate is bound by residues Gly156, 182-183 (AG), and 204-205 (NT).

It belongs to the ThiG family. In terms of assembly, homotetramer. Forms heterodimers with either ThiH or ThiS.

It localises to the cytoplasm. It catalyses the reaction [ThiS sulfur-carrier protein]-C-terminal-Gly-aminoethanethioate + 2-iminoacetate + 1-deoxy-D-xylulose 5-phosphate = [ThiS sulfur-carrier protein]-C-terminal Gly-Gly + 2-[(2R,5Z)-2-carboxy-4-methylthiazol-5(2H)-ylidene]ethyl phosphate + 2 H2O + H(+). It participates in cofactor biosynthesis; thiamine diphosphate biosynthesis. Catalyzes the rearrangement of 1-deoxy-D-xylulose 5-phosphate (DXP) to produce the thiazole phosphate moiety of thiamine. Sulfur is provided by the thiocarboxylate moiety of the carrier protein ThiS. In vitro, sulfur can be provided by H(2)S. This is Thiazole synthase from Shewanella sediminis (strain HAW-EB3).